A 972-amino-acid chain; its full sequence is Hemoglobin and hemoglobin-haptoglobin-binding protein (972 aa).

Residues 1-22 (MKANKLSAITLCILGYAHTVYA) form the signal peptide. The short motif at 32-39 (ETIVVSSE) is the TonB box element. Residues 38-167 (SEDDSVHNKN…LGGTVSFESK (130 aa)) enclose the TBDR plug domain. The 798-residue stretch at 175–972 (DKNYHFGYKT…NFRVNAEITF (798 aa)) folds into the TBDR beta-barrel domain. The TonB C-terminal box motif lies at 955–972 (KRFNAPGRNFRVNAEITF).

This sequence belongs to the TonB-dependent receptor family. Hemoglobin/haptoglobin binding protein subfamily.

The protein localises to the cell outer membrane. In terms of biological role, acts as a receptor for hemoglobin or the hemoglobin/haptoglobin complex of the host and is required for heme uptake. May be involved in virulence. This Haemophilus ducreyi (strain 35000HP / ATCC 700724) protein is Hemoglobin and hemoglobin-haptoglobin-binding protein.